The chain runs to 337 residues: GTPase Obg (337 aa).

An Obg domain is found at 1 to 159 (MKFVDSASIF…LMLNMELKLM (159 aa)). In terms of domain architecture, OBG-type G spans 160 to 323 (ADVGLVGFPN…LKDELWREVS (164 aa)). Residues 166-173 (GFPNAGKS), 191-195 (FTTLV), 213-216 (DIPG), 280-283 (TKMD), and 304-306 (SAV) contribute to the GTP site. Mg(2+) contacts are provided by serine 173 and threonine 193.

It belongs to the TRAFAC class OBG-HflX-like GTPase superfamily. OBG GTPase family. Monomer. Mg(2+) serves as cofactor.

The protein localises to the cytoplasm. An essential GTPase which binds GTP, GDP and possibly (p)ppGpp with moderate affinity, with high nucleotide exchange rates and a fairly low GTP hydrolysis rate. Plays a role in control of the cell cycle, stress response, ribosome biogenesis and in those bacteria that undergo differentiation, in morphogenesis control. This is GTPase Obg from Pelodictyon phaeoclathratiforme (strain DSM 5477 / BU-1).